Here is a 388-residue protein sequence, read N- to C-terminus: Dual-specificity RNA methyltransferase RlmN (388 aa).

Residue Glu109 is the Proton acceptor of the active site. In terms of domain architecture, Radical SAM core spans 115–354 (EEDRATLCVS…TIVRKTRGDD (240 aa)). The cysteines at positions 122 and 359 are disulfide-linked. Positions 129, 133, and 136 each coordinate [4Fe-4S] cluster. Residues 183-184 (GE), Ser215, 237-239 (SLH), and Asn316 contribute to the S-adenosyl-L-methionine site. Catalysis depends on Cys359, which acts as the S-methylcysteine intermediate.

The protein belongs to the radical SAM superfamily. RlmN family. It depends on [4Fe-4S] cluster as a cofactor.

The protein resides in the cytoplasm. It catalyses the reaction adenosine(2503) in 23S rRNA + 2 reduced [2Fe-2S]-[ferredoxin] + 2 S-adenosyl-L-methionine = 2-methyladenosine(2503) in 23S rRNA + 5'-deoxyadenosine + L-methionine + 2 oxidized [2Fe-2S]-[ferredoxin] + S-adenosyl-L-homocysteine. It carries out the reaction adenosine(37) in tRNA + 2 reduced [2Fe-2S]-[ferredoxin] + 2 S-adenosyl-L-methionine = 2-methyladenosine(37) in tRNA + 5'-deoxyadenosine + L-methionine + 2 oxidized [2Fe-2S]-[ferredoxin] + S-adenosyl-L-homocysteine. Its function is as follows. Specifically methylates position 2 of adenine 2503 in 23S rRNA and position 2 of adenine 37 in tRNAs. m2A2503 modification seems to play a crucial role in the proofreading step occurring at the peptidyl transferase center and thus would serve to optimize ribosomal fidelity. This chain is Dual-specificity RNA methyltransferase RlmN, found in Enterobacter sp. (strain 638).